Consider the following 332-residue polypeptide: Putative pumilio homolog 20 (332 aa).

Residues 1–332 (MAHQLRFAAA…NIASILNSIR (332 aa)) enclose the PUM-HD domain. Pumilio repeat units follow at residues 89–124 (SDPDYFLMIARNMNGSKRIQKLLGKTDDVDALFAAA) and 125–159 (ILRRFLHIITDKYASYVVRRGMTVFDKKKKKAMYE). The stretch at 160 to 191 (HILHYASHIARDKHGNLALNDIITDAYRNKLF) is one Pumilio 3; degenerate repeat. 3 Pumilio repeats span residues 192 to 228 (DVIAHKALVLSNDAYGNFVIQRVLKLNDLRSKNNIVV), 229 to 266 (SLRGHFVDLSFQKYGSYVVDVLLETKESMVVVVEELME), and 267 to 303 (CEGDMLMRLARNEYGNFLVCKALRVTQKEMVRTDLFW).

It is found in the cytoplasm. Functionally, sequence-specific RNA-binding protein that regulates translation and mRNA stability by binding the 3'-UTR of target mRNAs. This is Putative pumilio homolog 20 (APUM20) from Arabidopsis thaliana (Mouse-ear cress).